Consider the following 206-residue polypeptide: MMQESVLAQLDVSRETSEKLSHFVALVEKWNKAVNLIGRSTVDSIWTRHVLDSAQLRTHLASQPRLWLDLGSGSGFPGIVVAIMAAYESPESRFVLVESDQRKATFLRTACRELKLSASVLAARIESLPPQKADVISARALAALPDLCALAAPHLAPNGICLFPKGVGHISEIAAARQSWNMEVETLPSLTDPDAVILKLKALAHV.

S-adenosyl-L-methionine-binding positions include Gly71, Phe76, 125–126, and Arg139; that span reads IE.

This sequence belongs to the methyltransferase superfamily. RNA methyltransferase RsmG family.

It is found in the cytoplasm. The enzyme catalyses guanosine(527) in 16S rRNA + S-adenosyl-L-methionine = N(7)-methylguanosine(527) in 16S rRNA + S-adenosyl-L-homocysteine. Its function is as follows. Specifically methylates the N7 position of guanine in position 527 of 16S rRNA. The chain is Ribosomal RNA small subunit methyltransferase G from Cereibacter sphaeroides (strain ATCC 17023 / DSM 158 / JCM 6121 / CCUG 31486 / LMG 2827 / NBRC 12203 / NCIMB 8253 / ATH 2.4.1.) (Rhodobacter sphaeroides).